Consider the following 229-residue polypeptide: Potassium/proton antiporter CemA (229 aa).

The next 3 membrane-spanning stretches (helical) occupy residues 6–26 (AFIP…ISLC), 107–127 (ILHF…SFWG), and 189–209 (ILSG…KYWI).

The protein belongs to the CemA family.

The protein localises to the plastid. It is found in the chloroplast inner membrane. It carries out the reaction K(+)(in) + H(+)(out) = K(+)(out) + H(+)(in). In terms of biological role, contributes to K(+)/H(+) antiport activity by supporting proton efflux to control proton extrusion and homeostasis in chloroplasts in a light-dependent manner to modulate photosynthesis. Prevents excessive induction of non-photochemical quenching (NPQ) under continuous-light conditions. Indirectly promotes efficient inorganic carbon uptake into chloroplasts. The protein is Potassium/proton antiporter CemA of Arabis hirsuta (Hairy rock-cress).